The following is a 198-amino-acid chain: Recombination protein RecR (198 aa).

Residues cysteine 57–cysteine 72 form a C4-type zinc finger. A Toprim domain is found at serine 80–proline 175.

This sequence belongs to the RecR family.

Its function is as follows. May play a role in DNA repair. It seems to be involved in an RecBC-independent recombinational process of DNA repair. It may act with RecF and RecO. This is Recombination protein RecR from Bacillus pumilus (strain SAFR-032).